A 488-amino-acid polypeptide reads, in one-letter code: Inosine-5'-monophosphate dehydrogenase (488 aa).

CBS domains are found at residues 94–150 (IVSE…SKTV) and 154–215 (MTKK…CKDE). NAD(+)-binding positions include aspartate 249, 249–251 (DSS), and 299–301 (GIG). Positions 301 and 303 each coordinate K(+). Serine 304 lines the IMP pocket. Residue cysteine 306 participates in K(+) binding. Cysteine 306 (thioimidate intermediate) is an active-site residue. IMP contacts are provided by residues 339–341 (DGG), 362–363 (GS), and 386–390 (YRGMG). Arginine 402 functions as the Proton acceptor in the catalytic mechanism. Glutamate 416 lines the IMP pocket. Glutamate 470, serine 471, and histidine 472 together coordinate K(+).

The protein belongs to the IMPDH/GMPR family. In terms of assembly, homotetramer. It depends on K(+) as a cofactor.

It carries out the reaction IMP + NAD(+) + H2O = XMP + NADH + H(+). Its pathway is purine metabolism; XMP biosynthesis via de novo pathway; XMP from IMP: step 1/1. Mycophenolic acid (MPA) is a non-competitive inhibitor that prevents formation of the closed enzyme conformation by binding to the same site as the amobile flap. In contrast, mizoribine monophosphate (MZP) is a competitive inhibitor that induces the closed conformation. MPA is a potent inhibitor of mammalian IMPDHs but a poor inhibitor of the bacterial enzymes. MZP is a more potent inhibitor of bacterial IMPDH. In terms of biological role, catalyzes the conversion of inosine 5'-phosphate (IMP) to xanthosine 5'-phosphate (XMP), the first committed and rate-limiting step in the de novo synthesis of guanine nucleotides, and therefore plays an important role in the regulation of cell growth. The chain is Inosine-5'-monophosphate dehydrogenase from Haemophilus influenzae (strain ATCC 51907 / DSM 11121 / KW20 / Rd).